Reading from the N-terminus, the 181-residue chain is CD160 antigen (181 aa).

The signal sequence occupies residues 1–24 (MLLEPGRGCCALAILLAIVDIQSG). The Ig-like V-type domain occupies 25-133 (GCINITSSAS…QGHFFSILFT (109 aa)). Asparagine 28 carries an N-linked (GlcNAc...) asparagine glycan. Cystine bridges form between cysteine 44–cysteine 112 and cysteine 61–cysteine 68. The N-linked (GlcNAc...) asparagine glycan is linked to asparagine 137. Serine 159 carries GPI-anchor amidated serine lipidation. Residues 160–181 (SGFLQEKVWVMLVTSLVALQAL) constitute a propeptide, removed in mature form.

Homomultimer; disulfide-linked. Interacts with HLA-G. Interacts with HLA-A2-B2M in complex with an HIV-derived peptide. Interacts with TNFRSF14 (via cysteine-rich domain 1); this interaction is direct. Interacts with LCK and CD247/CD3 zeta chain. Expression is restricted to functional NK and cytotoxic T lymphocytes. Expressed in viral-specific effector memory and terminally differentiated effector memory CD8+ T cells. Expressed in memory and activated CD4+ T cell subsets (at protein level). Expressed at high levels in intraepithelial lymphocytes (at protein level). Expressed in both alpha-beta and gamma-delta CD8+ T cell subsets (at protein level). Expressed in umbilical vein endothelial cells (at protein level). Expressed in monocytes and at lower levels in B cells. Isoform 3: Expressed exclusively in activated NK cells (at protein level).

It localises to the cell membrane. It is found in the secreted. Its function is as follows. Receptor on immune cells capable to deliver stimulatory or inhibitory signals that regulate cell activation and differentiation. Exists as a GPI-anchored and as a transmembrane form, each likely initiating distinct signaling pathways via phosphoinositol 3-kinase in activated NK cells and via LCK and CD247/CD3 zeta chain in activated T cells. Receptor for both classical and non-classical MHC class I molecules. In the context of acute viral infection, recognizes HLA-C and triggers NK cell cytotoxic activity, likely playing a role in anti-viral innate immune response. On CD8+ T cells, binds HLA-A2-B2M in complex with a viral peptide and provides a costimulatory signal to activated/memory T cells. Upon persistent antigen stimulation, such as occurs during chronic viral infection, may progressively inhibit TCR signaling in memory CD8+ T cells, contributing to T cell exhaustion. On endothelial cells, recognizes HLA-G and controls angiogenesis in immune privileged sites. Receptor or ligand for TNF superfamily member TNFRSF14, participating in bidirectional cell-cell contact signaling between antigen presenting cells and lymphocytes. Upon ligation of TNFRSF14, provides stimulatory signal to NK cells enhancing IFNG production and anti-tumor immune response. On activated CD4+ T cells, interacts with TNFRSF14 and down-regulates CD28 costimulatory signaling, restricting memory and alloantigen-specific immune response. In the context of bacterial infection, acts as a ligand for TNFRSF14 on epithelial cells, triggering the production of antimicrobial proteins and pro-inflammatory cytokines. In terms of biological role, the soluble GPI-cleaved form, usually released by activated lymphocytes, might play an immune regulatory role by limiting lymphocyte effector functions. This chain is CD160 antigen, found in Homo sapiens (Human).